The primary structure comprises 258 residues: Glutamate racemase (258 aa).

Residues 11–12 (DS) and 43–44 (YG) contribute to the substrate site. C74 acts as the Proton donor/acceptor in catalysis. Residue 75–76 (NT) participates in substrate binding. Catalysis depends on C187, which acts as the Proton donor/acceptor. A substrate-binding site is contributed by 188–189 (TH).

The protein belongs to the aspartate/glutamate racemases family.

It carries out the reaction L-glutamate = D-glutamate. It participates in cell wall biogenesis; peptidoglycan biosynthesis. Provides the (R)-glutamate required for cell wall biosynthesis. This is Glutamate racemase from Bifidobacterium animalis subsp. lactis (strain AD011).